Here is a 1275-residue protein sequence, read N- to C-terminus: ATP-dependent helicase/nuclease subunit A (1275 aa).

In terms of domain architecture, UvrD-like helicase ATP-binding spans 4 to 481 (PKWTKEQLEV…IMLYKNFRSR (478 aa)). An ATP-binding site is contributed by 25–32 (AAAGSGKT). The 309-residue stretch at 531 to 839 (TEIHLIQKDN…RIMSIHKSKG (309 aa)) folds into the UvrD-like helicase C-terminal domain.

It belongs to the helicase family. AddA subfamily. Heterodimer of AddA and AddB/RexB. Mg(2+) serves as cofactor.

The enzyme catalyses Couples ATP hydrolysis with the unwinding of duplex DNA by translocating in the 3'-5' direction.. It carries out the reaction ATP + H2O = ADP + phosphate + H(+). Functionally, the heterodimer acts as both an ATP-dependent DNA helicase and an ATP-dependent, dual-direction single-stranded exonuclease. Recognizes the chi site generating a DNA molecule suitable for the initiation of homologous recombination. The AddA nuclease domain is required for chi fragment generation; this subunit has the helicase and 3' -&gt; 5' nuclease activities. This chain is ATP-dependent helicase/nuclease subunit A, found in Clostridioides difficile (strain 630) (Peptoclostridium difficile).